Consider the following 661-residue polypeptide: UvrABC system protein B (661 aa).

The 387-residue stretch at 28–414 folds into the Helicase ATP-binding domain; that stretch reads DGVNEGKRHQ…HTDEMVEQII (387 aa). 41-48 lines the ATP pocket; it reads GATGTGKT. Residues 94 to 117 carry the Beta-hairpin motif; sequence YYDYYQPEAYVPSTDTFIEKDASI. The Helicase C-terminal domain occupies 432-598; that stretch reads QIDDLLSEIQ…TINKKIHDVI (167 aa). Residues 603 to 624 form a disordered region; sequence ESDETNQQQQTELPKKMTKKER. The UVR domain occupies 625–660; that stretch reads QKTIENIEKEMKKAAKDLDFEKATELRDMLFELKAE.

The protein belongs to the UvrB family. As to quaternary structure, forms a heterotetramer with UvrA during the search for lesions. Interacts with UvrC in an incision complex.

Its subcellular location is the cytoplasm. The UvrABC repair system catalyzes the recognition and processing of DNA lesions. A damage recognition complex composed of 2 UvrA and 2 UvrB subunits scans DNA for abnormalities. Upon binding of the UvrA(2)B(2) complex to a putative damaged site, the DNA wraps around one UvrB monomer. DNA wrap is dependent on ATP binding by UvrB and probably causes local melting of the DNA helix, facilitating insertion of UvrB beta-hairpin between the DNA strands. Then UvrB probes one DNA strand for the presence of a lesion. If a lesion is found the UvrA subunits dissociate and the UvrB-DNA preincision complex is formed. This complex is subsequently bound by UvrC and the second UvrB is released. If no lesion is found, the DNA wraps around the other UvrB subunit that will check the other stand for damage. The sequence is that of UvrABC system protein B from Staphylococcus epidermidis (strain ATCC 35984 / DSM 28319 / BCRC 17069 / CCUG 31568 / BM 3577 / RP62A).